We begin with the raw amino-acid sequence, 185 residues long: dCTP deaminase (185 aa).

DCTP contacts are provided by residues 108–113 (KSTYAR), 132–134 (TLE), Q153, Y167, and Q177. E134 functions as the Proton donor/acceptor in the catalytic mechanism.

The protein belongs to the dCTP deaminase family. In terms of assembly, homotrimer.

The catalysed reaction is dCTP + H2O + H(+) = dUTP + NH4(+). The protein operates within pyrimidine metabolism; dUMP biosynthesis; dUMP from dCTP (dUTP route): step 1/2. Functionally, catalyzes the deamination of dCTP to dUTP. This Pelagibacter ubique (strain HTCC1062) protein is dCTP deaminase.